Reading from the N-terminus, the 319-residue chain is Multivesicular body subunit 12B (319 aa).

Residues 1 to 50 (MRSCFCVRRSRDPPPPQPPPPPPQRGTDQSTMPEVKDLSEALPETSMDPI) are disordered. The span at 13–24 (PPPPQPPPPPPQ) shows a compositional bias: pro residues. Phosphoserine is present on residues serine 46 and serine 101. The MABP domain maps to 47–193 (MDPITGVGVV…SMGIWYRMGR (147 aa)). Residues threonine 122, threonine 204, and threonine 205 each carry the phosphothreonine modification. The tract at residues 195–222 (PRNHDSSQPTTPSQSSAASTPAPNLPRH) is disordered. Residues 200 to 216 (SSQPTTPSQSSAASTPA) are compositionally biased toward low complexity. At serine 224 the chain carries Phosphoserine. In terms of domain architecture, UMA spans 254 to 303 (MDGVPFMISEKFSCVPESMQPFDLLGITIKSLAEIEKEYEYSFRTEQSAA). Positions 299–319 (EQSAAARLPPSPTRCQQIPQS) are disordered. The residue at position 309 (serine 309) is a Phosphoserine.

It belongs to the MVB12 family. As to quaternary structure, component of the ESCRT-I complex (endosomal sorting complex required for transport I) which consists of TSG101, VPS28, a VPS37 protein (VPS37A to -D) and MVB12A or MVB12B in a 1:1:1:1 stoichiometry. Interacts with TSG101; the association appears to be mediated by the TSG101-VPS37 binary subcomplex. Interacts with VPS28. Interacts with VPS37B; the association appears to be mediated by the TSG101-VPS37 binary subcomplex. Interacts with VPS37C; the association appears to be mediated by the TSG101-VPS37 binary subcomplex.

The protein localises to the endosome. It localises to the late endosome membrane. In terms of biological role, component of the ESCRT-I complex, a regulator of vesicular trafficking process. Required for the sorting of endocytic ubiquitinated cargos into multivesicular bodies. The chain is Multivesicular body subunit 12B (MVB12B) from Homo sapiens (Human).